The following is a 548-amino-acid chain: Chaperonin GroEL (548 aa).

Residues T29–P32, K50, D86–T90, G414, N478–A480, and D494 each bind ATP.

Belongs to the chaperonin (HSP60) family. As to quaternary structure, forms a cylinder of 14 subunits composed of two heptameric rings stacked back-to-back. Interacts with the co-chaperonin GroES.

Its subcellular location is the cytoplasm. It carries out the reaction ATP + H2O + a folded polypeptide = ADP + phosphate + an unfolded polypeptide.. In terms of biological role, together with its co-chaperonin GroES, plays an essential role in assisting protein folding. The GroEL-GroES system forms a nano-cage that allows encapsulation of the non-native substrate proteins and provides a physical environment optimized to promote and accelerate protein folding. Its function is as follows. May play a protective role against the defense mechanisms generated by the infected macrophages. This is Chaperonin GroEL from Legionella pneumophila subsp. pneumophila (strain Philadelphia 1 / ATCC 33152 / DSM 7513).